The primary structure comprises 257 residues: Imidazole glycerol phosphate synthase subunit HisF (257 aa).

Residues aspartate 11 and aspartate 130 contribute to the active site.

This sequence belongs to the HisA/HisF family. Heterodimer of HisH and HisF.

The protein resides in the cytoplasm. It catalyses the reaction 5-[(5-phospho-1-deoxy-D-ribulos-1-ylimino)methylamino]-1-(5-phospho-beta-D-ribosyl)imidazole-4-carboxamide + L-glutamine = D-erythro-1-(imidazol-4-yl)glycerol 3-phosphate + 5-amino-1-(5-phospho-beta-D-ribosyl)imidazole-4-carboxamide + L-glutamate + H(+). It participates in amino-acid biosynthesis; L-histidine biosynthesis; L-histidine from 5-phospho-alpha-D-ribose 1-diphosphate: step 5/9. IGPS catalyzes the conversion of PRFAR and glutamine to IGP, AICAR and glutamate. The HisF subunit catalyzes the cyclization activity that produces IGP and AICAR from PRFAR using the ammonia provided by the HisH subunit. This chain is Imidazole glycerol phosphate synthase subunit HisF, found in Prochlorococcus marinus (strain MIT 9515).